Consider the following 210-residue polypeptide: Urease accessory protein UreF (210 aa).

Belongs to the UreF family. As to quaternary structure, ureD, UreF and UreG form a complex that acts as a GTP-hydrolysis-dependent molecular chaperone, activating the urease apoprotein by helping to assemble the nickel containing metallocenter of UreC. The UreE protein probably delivers the nickel.

The protein resides in the cytoplasm. Functionally, required for maturation of urease via the functional incorporation of the urease nickel metallocenter. This chain is Urease accessory protein UreF, found in Cereibacter sphaeroides (strain ATCC 17025 / ATH 2.4.3) (Rhodobacter sphaeroides).